The sequence spans 277 residues: NH(3)-dependent NAD(+) synthetase (277 aa).

ATP is bound at residue 36 to 43; the sequence is GLSGGIDS. Mg(2+) is bound at residue Asp42. Residue Arg118 coordinates deamido-NAD(+). Thr138 is a binding site for ATP. A Mg(2+)-binding site is contributed by Glu143. ATP contacts are provided by Lys167 and Ser189.

This sequence belongs to the NAD synthetase family. In terms of assembly, homodimer.

It carries out the reaction deamido-NAD(+) + NH4(+) + ATP = AMP + diphosphate + NAD(+) + H(+). It participates in cofactor biosynthesis; NAD(+) biosynthesis; NAD(+) from deamido-NAD(+) (ammonia route): step 1/1. Functionally, catalyzes the ATP-dependent amidation of deamido-NAD to form NAD. Uses ammonia as a nitrogen source. In Chlorobaculum parvum (strain DSM 263 / NCIMB 8327) (Chlorobium vibrioforme subsp. thiosulfatophilum), this protein is NH(3)-dependent NAD(+) synthetase.